We begin with the raw amino-acid sequence, 260 residues long: Thrombin-like enzyme flavoxobin (260 aa).

An N-terminal signal peptide occupies residues 1 to 18 (MVLIRVLANLLILQLSYA). A propeptide spanning residues 19–24 (QKSSEL) is cleaved from the precursor. Residues 25 to 251 (VIGGDECNIN…YNAWIQSIIA (227 aa)) form the Peptidase S1 domain. 6 disulfide bridges follow: cysteine 31/cysteine 165, cysteine 52/cysteine 68, cysteine 100/cysteine 258, cysteine 144/cysteine 212, cysteine 176/cysteine 191, and cysteine 202/cysteine 227. Residues histidine 67 and aspartate 112 each act as charge relay system in the active site. The active-site Charge relay system is serine 206.

This sequence belongs to the peptidase S1 family. Snake venom subfamily. In terms of assembly, monomer. As to expression, expressed by the venom gland.

Its subcellular location is the secreted. It carries out the reaction Selective cleavage of Arg-|-Xaa bond in fibrinogen, to form fibrin, and release fibrinopeptide A. The specificity of further degradation of fibrinogen varies with species origin of the enzyme.. With respect to regulation, inhibited by alpha(2)-macroglobulin, diisopropylfluorophosphate (DFP) and PMSF. Low inhibition by tosyl-L-lysine chloromethyl ketone. Functionally, thrombin-like snake venom serine protease that clots fibrinogen (FGA) by releasing fibrinopeptide A. According to PubMed:8585090, only cleaves rabbit fibrinogen, whereas no specificity is described in PubMed:3910643 (tests done on bovine fibrinogen). Also acts as a C3 convertase that independently cleaves human C3 and kick-starts the complement cascade. Also increases urokinase-type plasminogen activator (PLAU) and plasminogen activator inhibitor (SERPINE1) in cultured bovine pulmonary artery endothelial cells. Dose-dependently inhibits collagen-induced platelet aggregation. The polypeptide is Thrombin-like enzyme flavoxobin (TLF1) (Protobothrops flavoviridis (Habu)).